The chain runs to 390 residues: Putative gustatory receptor 59d (390 aa).

The Cytoplasmic portion of the chain corresponds to 1–38 (MADLLKLCLRIAYAYGRLTGVINFKIDLKTGQALVTRG). Residues 39–59 (ATLISVSTHLLIFALLLYQTM) form a helical membrane-spanning segment. The Extracellular portion of the chain corresponds to 60–75 (RKSVVNVMWKYANSLH). The chain crosses the membrane as a helical span at residues 76 to 96 (EYVFLVIAGFRVVCVFLELVS). Residues 97–128 (RWSQRRTFVRLFNSFRRLYQRNPDIIQYCRRS) lie on the Cytoplasmic side of the membrane. Residues 129 to 149 (IVSKFFCVTMTETLHIIVTLA) form a helical membrane-spanning segment. The Extracellular segment spans residues 150 to 156 (MMRNRLS). A helical transmembrane segment spans residues 157 to 177 (IALALRIWAVLSLTAIINVII). Over 178 to 252 (TQYYVATACV…NLSTAYEGEV (75 aa)) the chain is Cytoplasmic. The helical transmembrane segment at 253-273 (VCLVITYYLNMLGTSYLLFSI) threads the bilayer. At 274–283 (SKYGNFGNNL) the chain is on the extracellular side. Residues 284-304 (LVIITLCGIVYFVFYVVDCWI) traverse the membrane as a helical segment. Topologically, residues 305–366 (NAFNVFYLLD…MYGLFEFGRG (62 aa)) are cytoplasmic. Residues 367-383 (TSFAVFNSLLTHSLLLI) traverse the membrane as a helical segment. At 384 to 390 (QYDVQNF) the chain is on the extracellular side.

It belongs to the insect chemoreceptor superfamily. Gustatory receptor (GR) family. Gr22e subfamily. In terms of tissue distribution, expressed in the adult labellar chemosensory neurons. In larvae, is expressed in neurons of the terminal external chemosensory organ as well as in the dorsal pharyngeal sense organ.

The protein localises to the cell membrane. Functionally, probable gustatory receptor which mediates acceptance or avoidance behavior, depending on its substrates. The polypeptide is Putative gustatory receptor 59d (Gr59d) (Drosophila melanogaster (Fruit fly)).